A 1985-amino-acid chain; its full sequence is Voltage-dependent L-type calcium channel subunit alpha-1F (1985 aa).

Residues 1–11 (MSESEVGKDTT) show a composition bias toward basic and acidic residues. The segment at 1–56 (MSESEVGKDTTPEPSPANGTGPGPEWGLCPGPPTVGTDTSGASGLGTPRRRTQHNK) is disordered. The Cytoplasmic portion of the chain corresponds to 1–92 (MSESEVGKDT…RSCISIVEWK (92 aa)). The stretch at 79 to 375 (NPIRRSCISI…LVLGVLSGEF (297 aa)) is one I repeat. A helical transmembrane segment spans residues 93-111 (PFDILILLTIFANCVALGV). The Extracellular portion of the chain corresponds to 112–129 (YIPFPEDDSNTANHNLEQ). Residues 130–149 (VEYVFLVIFTVETVLKIVAY) traverse the membrane as a helical segment. Topologically, residues 150–161 (GLVLHPSAYIRN) are cytoplasmic. A helical membrane pass occupies residues 162 to 180 (GWNLLDFIIVVVGLFSVLL). Residues 181–201 (EQGPGRPGDAPHTGGKPGGFD) are Extracellular-facing. The helical transmembrane segment at 202-220 (VKALRAFRVLRPLRLVSGV) threads the bilayer. At 221-239 (PSLHIVVNSIMKALVPLLH) the chain is on the cytoplasmic side. Residues 240 to 259 (IALLVLFVIIIYAIIGLELF) form a helical membrane-spanning segment. The Extracellular portion of the chain corresponds to 260 to 347 (LGRMHKTCYF…WMQDAMGYEL (88 aa)). The N-linked (GlcNAc...) asparagine glycan is linked to asparagine 295. Ca(2+) is bound at residue glutamate 330. The helical transmembrane segment at 348–372 (PWVYFVSLVIFGSFFVLNLVLGVLS) threads the bilayer. The Cytoplasmic segment spans residues 373 to 529 (GEFSKEREKA…ARCRRAVKSN (157 aa)). A binding to the beta subunit region spans residues 395-412 (QQMEEDLRGYLDWITQAE). Residues 455–469 (SHSTRSTHSTSSHAS) are compositionally biased toward low complexity. The disordered stretch occupies residues 455 to 490 (SHSTRSTHSTSSHASLPASDTGSMTDTPGDEDEEEG). Residues 515-761 (NRGLRARCRR…VFLAIAVDNL (247 aa)) form an II repeat. The helical transmembrane segment at 530 to 549 (ACYWAVLLLVFLNTLTIASE) threads the bilayer. The Extracellular portion of the chain corresponds to 550-564 (HHGQPLWLTQTQEYA). Residues 565–583 (NKVLLCLFTVEMLLKLYGL) traverse the membrane as a helical segment. Topologically, residues 584–591 (GPSVYVAS) are cytoplasmic. A helical membrane pass occupies residues 592–610 (FFNRFDCFVVCGGILETTL). Over 611–620 (VEVGAMQPLG) the chain is Extracellular. The helical transmembrane segment at 621–639 (ISVLRCVRLLRIFKVTRHW) threads the bilayer. Over 640-658 (ASLSNLVASLLNSMKSIAS) the chain is Cytoplasmic. A helical membrane pass occupies residues 659-679 (LLLLLFLFIIIFSLLGMQLFG). The Extracellular segment spans residues 680–733 (GKFNFDQTHTKRSTFDTFPQALLTVFQILTGEDWNVVMYDGIMAYGGPFFPGML). Residue glutamate 711 participates in Ca(2+) binding. The helical transmembrane segment at 734–758 (VCVYFIILFICGNYILLNVFLAIAV) threads the bilayer. Over 759 to 876 (DNLASGDAGT…KACHTLIHHH (118 aa)) the chain is Cytoplasmic. The disordered stretch occupies residues 766-834 (AGTAKDKGRE…EEEEENGAGH (69 aa)). Residues 768 to 787 (TAKDKGREKSSEGNPPKENK) are compositionally biased toward basic and acidic residues. A compositionally biased stretch (acidic residues) spans 810 to 830 (MEEEEEEEEEEEEEEEEEEEN). The stretch at 858 to 1140 (CLSQTNPLRK…FFMMNIFVGF (283 aa)) is one III repeat. A helical membrane pass occupies residues 877 to 895 (IFTSLILVFIILSSVSLAA). The Extracellular segment spans residues 896 to 911 (EDPIRAHSFRNHILGY). Residues 912 to 931 (FDYAFTSIFTVEILLKMTVF) form a helical membrane-spanning segment. Over 932-943 (GAFLHRGSFCRS) the chain is Cytoplasmic. Residues 944–962 (WFNLLDLLVVSVSLISFGI) traverse the membrane as a helical segment. Topologically, residues 963–968 (HSSAIS) are extracellular. Residues 969–988 (VVKILRVLRVLRPLRAINRA) form a helical membrane-spanning segment. The Cytoplasmic segment spans residues 989–1007 (KGLKHVVQCVFVAIRTIGN). A helical membrane pass occupies residues 1008 to 1027 (IMIVTTLLQFMFACIGVQLF). Over 1028–1117 (KGKFYSCTDE…EGPIYNYHVE (90 aa)) the chain is Extracellular. Residues 1065–1155 (RLWVNSDFNF…RAQGEQEYQN (91 aa)) form a dihydropyridine binding region. Ca(2+) is bound at residue glutamate 1091. Residues 1118-1138 (ISVFFIVYIIIIAFFMMNIFV) traverse the membrane as a helical segment. At 1139-1195 (GFVIITFRAQGEQEYQNCELDKNQRQCVEYALKAQPLRRYIPKNPHQYRVWATVNSR) the chain is on the cytoplasmic side. The IV repeat unit spans residues 1182 to 1449 (NPHQYRVWAT…LFVAVIMDNF (268 aa)). The chain crosses the membrane as a helical span at residues 1196 to 1214 (AFEYLMFLLILLNTVALAM). Over 1215-1229 (QHYEQTAPFNYAMDI) the chain is Extracellular. Residues 1230–1249 (LNMVFTGLFTIEMVLKIIAF) traverse the membrane as a helical segment. The Cytoplasmic portion of the chain corresponds to 1250 to 1256 (KPKHYFA). A helical membrane pass occupies residues 1257–1278 (DAWNTFDALIVVGSVVDIAVTE). The Extracellular segment spans residues 1279 to 1295 (VNNGGHLGESSEDTSRI). The chain crosses the membrane as a helical span at residues 1296–1315 (SITFFRLFRVMRLVKLLSKG). Topologically, residues 1316–1334 (EGIRTLLWTFIKSFQALPY) are cytoplasmic. A helical transmembrane segment spans residues 1335–1354 (VALLIAMIFFIYAVIGMQMF). The Extracellular portion of the chain corresponds to 1355–1421 (GLVALQDGTQ…GEEFTCGSSF (67 aa)). Residues 1402–1468 (RCDPESDFGP…LGPHHLDEFK (67 aa)) form a dihydropyridine binding region. The segment at 1414–1457 (EFTCGSSFAIVYFISFFMLCAFLIINLFVAVIMDNFDYLTRDWS) is phenylalkylamine binding. A helical transmembrane segment spans residues 1422-1446 (AIVYFISFFMLCAFLIINLFVAVIM). The Cytoplasmic segment spans residues 1447–1982 (DNFDYLTRDW…EDLGDEMACV (536 aa)). Disordered stretches follow at residues 1643 to 1729 (VTEE…PHRR) and 1746 to 1778 (LKGTQGQDNQNEEQELPDWTPDLDRAGRDSFEP). A compositionally biased stretch (acidic residues) spans 1644 to 1665 (TEEEEEEEEAVGQEAEEEEAEN). Composition is skewed to polar residues over residues 1675–1687 (DSQPQSRWNSRIS) and 1713–1724 (NSRQPSVIQAGS). Over residues 1767–1776 (DLDRAGRDSF) the composition is skewed to basic and acidic residues.

It belongs to the calcium channel alpha-1 subunit (TC 1.A.1.11) family. CACNA1F subfamily. Voltage-dependent calcium channels are multisubunit complexes, consisting of alpha-1, alpha-2, beta and delta subunits in a 1:1:1:1 ratio. The channel activity is directed by the pore-forming and voltage-sensitive alpha-1 subunit. In many cases, this subunit is sufficient to generate voltage-sensitive calcium channel activity. The auxiliary subunits beta and alpha-2/delta linked by a disulfide bridge regulate the channel activity. Interacts (via IQ domain) with CABP4; in a calcium independent manner. As to expression, expressed in the inner and outer nuclear layers and the genglion cell layer of the retina.

The protein localises to the membrane. The catalysed reaction is Ca(2+)(in) = Ca(2+)(out). Its function is as follows. Voltage-sensitive calcium channels (VSCC) mediate the entry of calcium ions into excitable cells and are also involved in a variety of calcium-dependent processes, including muscle contraction, hormone or neurotransmitter release, gene expression, cell motility, cell division and cell death. The isoform alpha-1F gives rise to L-type calcium currents. Long-lasting (L-type) calcium channels belong to the 'high-voltage activated' (HVA) group. They are blocked by dihydropyridines (DHP), phenylalkylamines, and by benzothiazepines. Activates at more negative voltages and does not undergo calcium-dependent inactivation (CDI), due to incoming calcium ions, during depolarization. The polypeptide is Voltage-dependent L-type calcium channel subunit alpha-1F (Mus musculus (Mouse)).